A 448-amino-acid polypeptide reads, in one-letter code: Exodeoxyribonuclease 7 large subunit (448 aa).

The protein belongs to the XseA family. As to quaternary structure, heterooligomer composed of large and small subunits.

Its subcellular location is the cytoplasm. It catalyses the reaction Exonucleolytic cleavage in either 5'- to 3'- or 3'- to 5'-direction to yield nucleoside 5'-phosphates.. In terms of biological role, bidirectionally degrades single-stranded DNA into large acid-insoluble oligonucleotides, which are then degraded further into small acid-soluble oligonucleotides. In Photobacterium profundum (strain SS9), this protein is Exodeoxyribonuclease 7 large subunit.